The chain runs to 640 residues: Dextranase (640 aa).

The signal sequence occupies residues 1–32 (MPGTGLGRLAKHVTAAAAVFLISTGAVLPAQA).

Belongs to the glycosyl hydrolase 49 family.

The protein resides in the secreted. It carries out the reaction Endohydrolysis of (1-&gt;6)-alpha-D-glucosidic linkages in dextran.. This chain is Dextranase, found in Arthrobacter globiformis.